Consider the following 307-residue polypeptide: Pyridoxal 5'-phosphate synthase subunit PdxS (307 aa).

A D-ribose 5-phosphate-binding site is contributed by Asp-37. Lys-94 acts as the Schiff-base intermediate with D-ribose 5-phosphate in catalysis. Gly-166 lines the D-ribose 5-phosphate pocket. Position 178 (Arg-178) interacts with D-glyceraldehyde 3-phosphate. Residues Gly-227 and Gly-248 to Ser-249 contribute to the D-ribose 5-phosphate site.

This sequence belongs to the PdxS/SNZ family. As to quaternary structure, in the presence of PdxT, forms a dodecamer of heterodimers.

It catalyses the reaction aldehydo-D-ribose 5-phosphate + D-glyceraldehyde 3-phosphate + L-glutamine = pyridoxal 5'-phosphate + L-glutamate + phosphate + 3 H2O + H(+). The protein operates within cofactor biosynthesis; pyridoxal 5'-phosphate biosynthesis. Catalyzes the formation of pyridoxal 5'-phosphate from ribose 5-phosphate (RBP), glyceraldehyde 3-phosphate (G3P) and ammonia. The ammonia is provided by the PdxT subunit. Can also use ribulose 5-phosphate and dihydroxyacetone phosphate as substrates, resulting from enzyme-catalyzed isomerization of RBP and G3P, respectively. In Mycobacterium leprae (strain Br4923), this protein is Pyridoxal 5'-phosphate synthase subunit PdxS.